The following is a 308-amino-acid chain: Cell division protein FtsQ (308 aa).

Positions 1–28 are disordered; the sequence is MQSLSFPPNRRTPRLAPPRRETGRRDPA. At 1–46 the chain is on the cytoplasmic side; that stretch reads MQSLSFPPNRRTPRLAPPRRETGRRDPAPSRWAYRAQRLWLTPMFR. Positions 18 to 28 are enriched in basic and acidic residues; the sequence is PRRETGRRDPA. Residues 47–67 form a helical membrane-spanning segment; that stretch reads TALRVGLPIVGVLLVVALIFA. At 68–308 the chain is on the periplasmic side; that stretch reads SADRRAAMAG…RGIDTSGSDL (241 aa). Residues 92–160 enclose the POTRA domain; sequence FMVTLLSVDG…GLLEVRVTER (69 aa).

The protein belongs to the FtsQ/DivIB family. FtsQ subfamily.

The protein localises to the cell inner membrane. In terms of biological role, essential cell division protein. This is Cell division protein FtsQ from Cereibacter sphaeroides (strain ATCC 17023 / DSM 158 / JCM 6121 / CCUG 31486 / LMG 2827 / NBRC 12203 / NCIMB 8253 / ATH 2.4.1.) (Rhodobacter sphaeroides).